The primary structure comprises 453 residues: Phenylalanine-4-hydroxylase (453 aa).

A2 is subject to N-acetylalanine. S16 is subject to Phosphoserine; by PKA. The ACT domain maps to 36-114; sequence SLIFSLKEEV…TVHELSRDKE (79 aa). Fe cation contacts are provided by H285, H290, and E330.

Belongs to the biopterin-dependent aromatic amino acid hydroxylase family. In terms of assembly, homodimer and homotetramer. It depends on Fe(2+) as a cofactor. Post-translationally, phosphorylation at Ser-16 increases basal activity and facilitates activation by the substrate phenylalanine.

The enzyme catalyses (6R)-L-erythro-5,6,7,8-tetrahydrobiopterin + L-phenylalanine + O2 = (4aS,6R)-4a-hydroxy-L-erythro-5,6,7,8-tetrahydrobiopterin + L-tyrosine. It functions in the pathway amino-acid degradation; L-phenylalanine degradation; acetoacetate and fumarate from L-phenylalanine: step 1/6. With respect to regulation, N-terminal region of PAH is thought to contain allosteric binding sites for phenylalanine and to constitute an 'inhibitory' domain that regulates the activity of a catalytic domain in the C-terminal portion of the molecule. Its function is as follows. Catalyzes the hydroxylation of L-phenylalanine to L-tyrosine. The polypeptide is Phenylalanine-4-hydroxylase (Pah) (Rattus norvegicus (Rat)).